A 349-amino-acid polypeptide reads, in one-letter code: Carbamoyl phosphate synthase small chain (349 aa).

The segment at 1–170 is CPSase; that stretch reads MKAKLILENG…KYEISGEGKK (170 aa). L-glutamine is bound by residues Ser-45, Gly-218, and Gly-220. The region spanning 170 to 349 is the Glutamine amidotransferase type-1 domain; it reads KVAIIDFGIK…IFDEFMKYAL (180 aa). The Nucleophile role is filled by Cys-245. L-glutamine-binding residues include Leu-246, Gln-249, Asn-287, Gly-289, and Tyr-290. Residues His-327 and Glu-329 contribute to the active site.

The protein belongs to the CarA family. Composed of two chains; the small (or glutamine) chain promotes the hydrolysis of glutamine to ammonia, which is used by the large (or ammonia) chain to synthesize carbamoyl phosphate. Tetramer of heterodimers (alpha,beta)4.

The enzyme catalyses hydrogencarbonate + L-glutamine + 2 ATP + H2O = carbamoyl phosphate + L-glutamate + 2 ADP + phosphate + 2 H(+). The catalysed reaction is L-glutamine + H2O = L-glutamate + NH4(+). Its pathway is amino-acid biosynthesis; L-arginine biosynthesis; carbamoyl phosphate from bicarbonate: step 1/1. The protein operates within pyrimidine metabolism; UMP biosynthesis via de novo pathway; (S)-dihydroorotate from bicarbonate: step 1/3. Functionally, small subunit of the glutamine-dependent carbamoyl phosphate synthetase (CPSase). CPSase catalyzes the formation of carbamoyl phosphate from the ammonia moiety of glutamine, carbonate, and phosphate donated by ATP, constituting the first step of 2 biosynthetic pathways, one leading to arginine and/or urea and the other to pyrimidine nucleotides. The small subunit (glutamine amidotransferase) binds and cleaves glutamine to supply the large subunit with the substrate ammonia. This Clostridium perfringens (strain 13 / Type A) protein is Carbamoyl phosphate synthase small chain.